The chain runs to 377 residues: ATP-dependent (S)-NAD(P)H-hydrate dehydratase (377 aa).

Residues 10 to 366 enclose the YjeF C-terminal domain; that stretch reads LLHLSRQLIQ…EYLHESFTEL (357 aa). (6S)-NADPHX contacts are provided by residues G148 and 201–207; that span reads NVVEFQR. ATP contacts are provided by residues 245 to 249 and 264 to 273; these read KGEHD and GSNKRVGGQG. D274 lines the (6S)-NADPHX pocket.

Belongs to the NnrD/CARKD family. It depends on Mg(2+) as a cofactor.

Its subcellular location is the cytoplasm. It catalyses the reaction (6S)-NADHX + ATP = ADP + phosphate + NADH + H(+). The catalysed reaction is (6S)-NADPHX + ATP = ADP + phosphate + NADPH + H(+). Catalyzes the dehydration of the S-form of NAD(P)HX at the expense of ATP, which is converted to ADP. Together with NAD(P)HX epimerase, which catalyzes the epimerization of the S- and R-forms, the enzyme allows the repair of both epimers of NAD(P)HX, a damaged form of NAD(P)H that is a result of enzymatic or heat-dependent hydration. The polypeptide is ATP-dependent (S)-NAD(P)H-hydrate dehydratase (Candida albicans (strain SC5314 / ATCC MYA-2876) (Yeast)).